The following is a 200-amino-acid chain: Large ribosomal subunit protein uL4 (200 aa).

The tract at residues 38–65 is disordered; it reads GRQGSKAQKTRSEVSGGGKKPWRQKGTG.

The protein belongs to the universal ribosomal protein uL4 family. In terms of assembly, part of the 50S ribosomal subunit.

One of the primary rRNA binding proteins, this protein initially binds near the 5'-end of the 23S rRNA. It is important during the early stages of 50S assembly. It makes multiple contacts with different domains of the 23S rRNA in the assembled 50S subunit and ribosome. Functionally, forms part of the polypeptide exit tunnel. This chain is Large ribosomal subunit protein uL4, found in Pseudomonas aeruginosa (strain LESB58).